Reading from the N-terminus, the 360-residue chain is Peptide chain release factor 1 (360 aa).

The residue at position 235 (Q235) is an N5-methylglutamine. The disordered stretch occupies residues Q286–N311.

Belongs to the prokaryotic/mitochondrial release factor family. Post-translationally, methylated by PrmC. Methylation increases the termination efficiency of RF1.

The protein resides in the cytoplasm. Peptide chain release factor 1 directs the termination of translation in response to the peptide chain termination codons UAG and UAA. This chain is Peptide chain release factor 1, found in Histophilus somni (strain 2336) (Haemophilus somnus).